A 266-amino-acid chain; its full sequence is Small ribosomal subunit protein eS1 (266 aa).

Residues 235-266 are disordered; the sequence is GGAGGAAKASGDDTGAKVERADGYEPPIQETV. Over residues 244 to 257 the composition is skewed to basic and acidic residues; it reads SGDDTGAKVERADG.

The protein belongs to the eukaryotic ribosomal protein eS1 family. In terms of assembly, component of the small ribosomal subunit. Mature ribosomes consist of a small (40S) and a large (60S) subunit. The 40S subunit contains about 33 different proteins and 1 molecule of RNA (18S). The 60S subunit contains about 49 different proteins and 3 molecules of RNA (28S, 5.8S and 5S).

The protein localises to the cytoplasm. Component of the small ribosomal subunit. The ribosome is a large ribonucleoprotein complex responsible for the synthesis of proteins in the cell. In Oryzias latipes (Japanese rice fish), this protein is Small ribosomal subunit protein eS1 (rps3a).